A 427-amino-acid polypeptide reads, in one-letter code: Transcription termination factor Rho (427 aa).

Positions 55–130 (YFFGEGVLEI…IKIEAINYRP (76 aa)) constitute a Rho RNA-BD domain. Residues 173–178 (GKGQRG), 185–190 (KAGKTT), and arginine 216 each bind ATP.

It belongs to the Rho family. As to quaternary structure, homohexamer. The homohexamer assembles into an open ring structure.

Facilitates transcription termination by a mechanism that involves Rho binding to the nascent RNA, activation of Rho's RNA-dependent ATPase activity, and release of the mRNA from the DNA template. The chain is Transcription termination factor Rho from Thermotoga maritima (strain ATCC 43589 / DSM 3109 / JCM 10099 / NBRC 100826 / MSB8).